Reading from the N-terminus, the 610-residue chain is V-type proton ATPase catalytic subunit A (610 aa).

245 to 252 (GAFGCGKT) is an ATP binding site.

This sequence belongs to the ATPase alpha/beta chains family. V-ATPase is a heteromultimeric enzyme composed of a peripheral catalytic V1 complex (main components: subunits A, B, C, D, E, and F) attached to an integral membrane V0 proton pore complex (main component: the proteolipid protein).

It carries out the reaction ATP + H2O + 4 H(+)(in) = ADP + phosphate + 5 H(+)(out). Functionally, catalytic subunit of the peripheral V1 complex of vacuolar ATPase. V-ATPase vacuolar ATPase is responsible for acidifying a variety of intracellular compartments in eukaryotic cells. The protein is V-type proton ATPase catalytic subunit A of Trypanosoma congolense.